The sequence spans 50 residues: Protein PsbN (50 aa).

Residues 14-34 (VAVTILAILLALTGFGLWTAF) form a helical membrane-spanning segment.

This sequence belongs to the PsbN family.

Its subcellular location is the cellular thylakoid membrane. May play a role in photosystem I and II biogenesis. This Prochlorococcus marinus (strain MIT 9312) protein is Protein PsbN.